A 191-amino-acid polypeptide reads, in one-letter code: Cdc42 homolog (191 aa).

A GTP-binding site is contributed by 10–17; sequence GDGAVGKT. An Effector region motif is present at residues 32-40; the sequence is YVPTVFDNY. GTP is bound by residues 57-61 and 115-118; these read DTAGQ and TQID. The residue at position 188 (cysteine 188) is a Cysteine methyl ester. Cysteine 188 carries the S-geranylgeranyl cysteine lipid modification. Positions 189–191 are cleaved as a propeptide — removed in mature form; it reads KFL.

The protein belongs to the small GTPase superfamily. Rho family. CDC42 subfamily.

Its subcellular location is the cell junction. It is found in the adherens junction. The protein resides in the cell membrane. The catalysed reaction is GTP + H2O = GDP + phosphate + H(+). Functionally, regulates mbt kinase activity and is also required to recruit mbt to adherens junctions. Together with mbt, regulates photoreceptor cell morphogenesis. The sequence is that of Cdc42 homolog from Drosophila pseudoobscura pseudoobscura (Fruit fly).